A 278-amino-acid chain; its full sequence is Shikimate dehydrogenase (NADP(+)) (278 aa).

Shikimate-binding positions include 15 to 17 and Thr-62; that span reads SMS. Lys-66 functions as the Proton acceptor in the catalytic mechanism. Glu-78 contributes to the NADP(+) binding site. Asn-87 and Asp-102 together coordinate shikimate. NADP(+) is bound by residues 127-131, 151-156, and Ile-217; these read GAGGA and NRTPEK. A shikimate-binding site is contributed by Tyr-219. Gly-240 is a binding site for NADP(+).

The protein belongs to the shikimate dehydrogenase family. Homodimer.

It catalyses the reaction shikimate + NADP(+) = 3-dehydroshikimate + NADPH + H(+). Its pathway is metabolic intermediate biosynthesis; chorismate biosynthesis; chorismate from D-erythrose 4-phosphate and phosphoenolpyruvate: step 4/7. Functionally, involved in the biosynthesis of the chorismate, which leads to the biosynthesis of aromatic amino acids. Catalyzes the reversible NADPH linked reduction of 3-dehydroshikimate (DHSA) to yield shikimate (SA). The protein is Shikimate dehydrogenase (NADP(+)) of Bacillus licheniformis (strain ATCC 14580 / DSM 13 / JCM 2505 / CCUG 7422 / NBRC 12200 / NCIMB 9375 / NCTC 10341 / NRRL NRS-1264 / Gibson 46).